Consider the following 296-residue polypeptide: mRNA export factor rsm1 (296 aa).

A C3HC-type zinc finger spans residues 40-174 (PWSREEFLRR…VSTHLPEEMT (135 aa)).

The protein resides in the cytoplasm. It is found in the nucleus. Its function is as follows. Involved in the export of mRNA from the nucleus to the cytoplasm. The chain is mRNA export factor rsm1 (rsm1) from Schizosaccharomyces pombe (strain 972 / ATCC 24843) (Fission yeast).